We begin with the raw amino-acid sequence, 223 residues long: MPAALPDHFFHRDAQLLARDLLGKVIRHKVGELWLAARIIETEAYYCAEKGSHASLGYTEKRKALFLDGGHIYMYYARGGDSLNFSAEGPGNAVLIKSAFPWTDATSDENALAQMQLNNPDASGAIRPPQRLCAGQTLLCKALGLKVPEWDARRFDPQRLLVEDIGQAPERIIQTTRLGIPAGRDEHLMYRFVDAGYARFCTRNPLRRGQVEGRDYLFLDQGN.

The protein belongs to the DNA glycosylase MPG family.

This chain is Putative 3-methyladenine DNA glycosylase, found in Pseudomonas savastanoi pv. phaseolicola (strain 1448A / Race 6) (Pseudomonas syringae pv. phaseolicola (strain 1448A / Race 6)).